Consider the following 3110-residue polypeptide: Huntingtin (3110 aa).

Residues 1 to 58 (MKAFESLKSFQQQQQQQQPPPQPPPPPPPPPQPPQPPPQGQPPPPPPLPGPAEEPLHR) form a disordered region. At Lys-2 the chain carries N6-acetyllysine. The segment covering 18–52 (QPPPQPPPPPPPPPQPPQPPPQGQPPPPPPLPGPA) has biased composition (pro residues). An N6-acetyllysine mark is found at Lys-146 and Lys-204. HEAT repeat units lie at residues 174 to 211 (PYLVNLLPCLTRTSKRPEESVQETLAAAVPKIMASFGN) and 216 to 253 (NEIKVLLKAFIANLKSSSPTVRRTAAGSAVSICQHSRR). Position 313 is an N6-acetyllysine (Lys-313). A phosphoserine mark is found at Ser-387, Ser-389, and Ser-402. Lys-412 bears the N6-acetyllysine mark. The interval 462 to 473 (GHDIITEQPRSQ) is interaction with ZDHHC17. A disordered region spans residues 487–549 (DLTSAATDGD…PDSAVTPSDS (63 aa)). Residues 521–549 (DGTQASSPISDSSQTTTEGPDSAVTPSDS) show a composition bias toward polar residues. Gly-522 is lipidated: N-myristoyl glycine. A phosphoserine mark is found at Ser-611 and Ser-614. HEAT repeat units follow at residues 773–810 (FSLVDCIPLLQKTLKDESSVTCKLACTAVRHCVLSLCS) and 873–911 (KLQERVLNNVVIYLLGDEDPRVRHVAATTLTRLVPKLFY). The disordered stretch occupies residues 1137–1195 (KAALPSLTNPPSLSPIRRKGKEKEPGEQTSTPMSPKKGGEASTASRQSDTSGPVTASKS). Residues 1140 to 1151 (LPSLTNPPSLSP) are compositionally biased toward low complexity. 2 positions are modified to phosphoserine; by CDK5: Ser-1150 and Ser-1170. Polar residues predominate over residues 1178 to 1195 (STASRQSDTSGPVTASKS). Residues 1395–1432 (LFEPLVIKALKQYTTTTSVQLQKQVLDLLAQLVQLRVN) form an HEAT 5 repeat. At Ser-1845 the chain carries Phosphoserine. A Nuclear export signal motif is present at residues 2363-2372 (IVVSLARLPL). A disordered region spans residues 2601 to 2628 (EEEWDEEEEEEADAPAPTSPPVSPVNSR). Acidic residues predominate over residues 2602-2613 (EEWDEEEEEEAD).

This sequence belongs to the huntingtin family. As to quaternary structure, interacts with PFN1. Interacts through its N-terminus with PRPF40A. Interacts with PQBP1. Interacts with SETD2. Interacts with SH3GLB1. Interacts with SYVN. Interacts with TPR; the interaction is inhibited by forms of Huntingtin with expanded polyglutamine stretch. Interacts with ZDHHC13 (via ANK repeats). Interacts with ZDHHC17 (via ANK repeats). Interacts with F8A1/F8A2/F8A3. Found in a complex with F8A1/F8A2/F8A3, HTT and RAB5A; mediates the recruitment of HTT by RAB5A. Post-translationally, phosphorylation at Ser-1150 and Ser-1170 by CDK5 in response to DNA damage in nuclei of neurons protects neurons against polyglutamine expansion as well as DNA damage mediated toxicity. Cleaved by caspases downstream of the polyglutamine stretch. In terms of processing, myristoylated at Gly-522, following proteolytic cleavage at Asp-521. In terms of tissue distribution, expressed to a high degree in all the regions of the brain of adults and in meiotic cells of the testis. In addition, very low levels are detected in various non-neuronal tissues (heart, muscle, liver, lung and kidney).

It localises to the cytoplasm. It is found in the nucleus. The protein localises to the cytoplasmic vesicle. Its subcellular location is the autophagosome. Its function is as follows. May play a role in microtubule-mediated transport or vesicle function. Functionally, promotes the formation of autophagic vesicles. This chain is Huntingtin (Htt), found in Rattus norvegicus (Rat).